Reading from the N-terminus, the 102-residue chain is Small ribosomal subunit protein uS10 (102 aa).

This sequence belongs to the universal ribosomal protein uS10 family. In terms of assembly, part of the 30S ribosomal subunit.

Its function is as follows. Involved in the binding of tRNA to the ribosomes. This Geobacter sulfurreducens (strain ATCC 51573 / DSM 12127 / PCA) protein is Small ribosomal subunit protein uS10.